Here is a 985-residue protein sequence, read N- to C-terminus: Protein psiQ (985 aa).

Positions 1–20 are cleaved as a signal peptide; the sequence is MMKYIYILLIFSLLFLKINS. The PA14 domain occupies 102–247; the sequence is QSTTNPNVYA…YDECGVCQGD (146 aa). 15 N-linked (GlcNAc...) asparagine glycosylation sites follow: asparagine 127, asparagine 309, asparagine 424, asparagine 491, asparagine 517, asparagine 527, asparagine 592, asparagine 620, asparagine 649, asparagine 696, asparagine 735, asparagine 767, asparagine 786, asparagine 824, and asparagine 842.

Belongs to the prespore-cell-inducing factor family.

The protein resides in the secreted. This is Protein psiQ (psiQ) from Dictyostelium discoideum (Social amoeba).